A 148-amino-acid polypeptide reads, in one-letter code: 3-dehydroquinate dehydratase (148 aa).

Residue tyrosine 23 is the Proton acceptor of the active site. Substrate contacts are provided by asparagine 75, histidine 81, and aspartate 88. The active-site Proton donor is histidine 101. Residues 102–103 and arginine 112 contribute to the substrate site; that span reads LS.

The protein belongs to the type-II 3-dehydroquinase family. As to quaternary structure, homododecamer.

It carries out the reaction 3-dehydroquinate = 3-dehydroshikimate + H2O. The protein operates within metabolic intermediate biosynthesis; chorismate biosynthesis; chorismate from D-erythrose 4-phosphate and phosphoenolpyruvate: step 3/7. Its function is as follows. Catalyzes a trans-dehydration via an enolate intermediate. This chain is 3-dehydroquinate dehydratase, found in Halorhodospira halophila (strain DSM 244 / SL1) (Ectothiorhodospira halophila (strain DSM 244 / SL1)).